The following is a 251-amino-acid chain: Ubiquinone/menaquinone biosynthesis C-methyltransferase UbiE (251 aa).

Residues Thr74, Asp95, 123–124, and Ser140 contribute to the S-adenosyl-L-methionine site; that span reads NA.

It belongs to the class I-like SAM-binding methyltransferase superfamily. MenG/UbiE family.

It catalyses the reaction a 2-demethylmenaquinol + S-adenosyl-L-methionine = a menaquinol + S-adenosyl-L-homocysteine + H(+). It carries out the reaction a 2-methoxy-6-(all-trans-polyprenyl)benzene-1,4-diol + S-adenosyl-L-methionine = a 5-methoxy-2-methyl-3-(all-trans-polyprenyl)benzene-1,4-diol + S-adenosyl-L-homocysteine + H(+). It functions in the pathway quinol/quinone metabolism; menaquinone biosynthesis; menaquinol from 1,4-dihydroxy-2-naphthoate: step 2/2. Its pathway is cofactor biosynthesis; ubiquinone biosynthesis. Methyltransferase required for the conversion of demethylmenaquinol (DMKH2) to menaquinol (MKH2) and the conversion of 2-polyprenyl-6-methoxy-1,4-benzoquinol (DDMQH2) to 2-polyprenyl-3-methyl-6-methoxy-1,4-benzoquinol (DMQH2). The sequence is that of Ubiquinone/menaquinone biosynthesis C-methyltransferase UbiE from Klebsiella pneumoniae subsp. pneumoniae (strain ATCC 700721 / MGH 78578).